The sequence spans 370 residues: tRNA-specific 2-thiouridylase MnmA (370 aa).

ATP is bound by residues 24 to 31 (AMSGGVDS) and L50. C119 acts as the Nucleophile in catalysis. Residues C119 and C215 are joined by a disulfide bond. G143 is an ATP binding site. The segment at 165–167 (KDQ) is interaction with tRNA. C215 acts as the Cysteine persulfide intermediate in catalysis.

It belongs to the MnmA/TRMU family.

It localises to the cytoplasm. The enzyme catalyses S-sulfanyl-L-cysteinyl-[protein] + uridine(34) in tRNA + AH2 + ATP = 2-thiouridine(34) in tRNA + L-cysteinyl-[protein] + A + AMP + diphosphate + H(+). Functionally, catalyzes the 2-thiolation of uridine at the wobble position (U34) of tRNA, leading to the formation of s(2)U34. The chain is tRNA-specific 2-thiouridylase MnmA from Wolbachia sp. subsp. Drosophila simulans (strain wRi).